The chain runs to 20 residues: Unknown protein NF007 from 2D-PAGE (20 aa).

The polypeptide is Unknown protein NF007 from 2D-PAGE (Naegleria fowleri (Brain eating amoeba)).